The chain runs to 168 residues: Cytochrome c-type biogenesis protein CcmE (168 aa).

The Cytoplasmic portion of the chain corresponds to 1–7 (MTRKKRR). The chain crosses the membrane as a helical; Signal-anchor for type II membrane protein span at residues 8–28 (LYMLGLALLGLGTATALTLSA). At 29-168 (FEENIVFFYS…KVHATTTLKP (140 aa)) the chain is on the periplasmic side. Positions 122 and 126 each coordinate heme. A disordered region spans residues 149–168 (SIYTPADSDDKVHATTTLKP).

The protein belongs to the CcmE/CycJ family.

Its subcellular location is the cell inner membrane. Functionally, heme chaperone required for the biogenesis of c-type cytochromes. Transiently binds heme delivered by CcmC and transfers the heme to apo-cytochromes in a process facilitated by CcmF and CcmH. In Rhodospirillum centenum (strain ATCC 51521 / SW), this protein is Cytochrome c-type biogenesis protein CcmE.